A 233-amino-acid chain; its full sequence is MGKTSKRFQELLKKVEQDKIYNLSEAIDTVKTLASAKFNETVEIALKLNVDPRHADQMVRGSVVLPAGTGKVVRVAVIAKDAKADEAKAAGADIVGADDLVEDIQKGIMNFDVLIATPNLMGLVGKVGRILGPKGLMPNPKTGTVTMDVAQAVNNAKSGQVNFRVDKQGNIHAGLGKVNFTKEQLNENISTFIKAINKHKPATAKGRYVKNASLSLTMSPSVTLDTQEVMDLK.

It belongs to the universal ribosomal protein uL1 family. As to quaternary structure, part of the 50S ribosomal subunit.

Functionally, binds directly to 23S rRNA. The L1 stalk is quite mobile in the ribosome, and is involved in E site tRNA release. Protein L1 is also a translational repressor protein, it controls the translation of the L11 operon by binding to its mRNA. This Campylobacter concisus (strain 13826) protein is Large ribosomal subunit protein uL1.